A 288-amino-acid polypeptide reads, in one-letter code: Pyridoxal kinase PdxY (288 aa).

Substrate contacts are provided by residues serine 12 and 47 to 48 (TQ). ATP-binding positions include aspartate 114, glutamate 151, lysine 184, and 211 to 214 (RPLL). Aspartate 225 lines the substrate pocket.

It belongs to the pyridoxine kinase family. PdxY subfamily. In terms of assembly, homodimer. It depends on Mg(2+) as a cofactor.

It catalyses the reaction pyridoxal + ATP = pyridoxal 5'-phosphate + ADP + H(+). Its pathway is cofactor metabolism; pyridoxal 5'-phosphate salvage; pyridoxal 5'-phosphate from pyridoxal: step 1/1. In terms of biological role, pyridoxal kinase involved in the salvage pathway of pyridoxal 5'-phosphate (PLP). Catalyzes the phosphorylation of pyridoxal to PLP. This Pseudomonas paraeruginosa (strain DSM 24068 / PA7) (Pseudomonas aeruginosa (strain PA7)) protein is Pyridoxal kinase PdxY.